Consider the following 75-residue polypeptide: uncharacterized protein (75 aa).

The N-terminal stretch at Met-1 to Ala-26 is a signal peptide.

The protein localises to the secreted. This is an uncharacterized protein from Schizosaccharomyces pombe (strain 972 / ATCC 24843) (Fission yeast).